The following is a 120-amino-acid chain: Ribonuclease P protein component (120 aa).

Belongs to the RnpA family. Consists of a catalytic RNA component (M1 or rnpB) and a protein subunit.

The enzyme catalyses Endonucleolytic cleavage of RNA, removing 5'-extranucleotides from tRNA precursor.. Functionally, RNaseP catalyzes the removal of the 5'-leader sequence from pre-tRNA to produce the mature 5'-terminus. It can also cleave other RNA substrates such as 4.5S RNA. The protein component plays an auxiliary but essential role in vivo by binding to the 5'-leader sequence and broadening the substrate specificity of the ribozyme. This chain is Ribonuclease P protein component, found in Thioalkalivibrio sulfidiphilus (strain HL-EbGR7).